The sequence spans 316 residues: L-lactate dehydrogenase (316 aa).

An NAD(+)-binding site is contributed by 34–39; the sequence is DVVEGV. 3 residues coordinate substrate: arginine 89, asparagine 121, and arginine 152. Residue asparagine 121 participates in NAD(+) binding. The Proton acceptor role is filled by histidine 172.

The protein belongs to the LDH/MDH superfamily. LDH family. As to quaternary structure, homotetramer.

It carries out the reaction (S)-lactate + NAD(+) = pyruvate + NADH + H(+). It participates in fermentation; pyruvate fermentation to lactate; (S)-lactate from pyruvate: step 1/1. This Botryococcus braunii (Green alga) protein is L-lactate dehydrogenase.